Reading from the N-terminus, the 101-residue chain is MGTPELKIILEFSAGAELLFGNIKRRELTLDGNQKWTIANLLKWMHANILTERPELFLQEDTVRPGILVLINDTDWELLGELDYELQPNDNVLFISTLHGG.

Residue glycine 101 is modified to 1-thioglycine. A Glycyl lysine isopeptide (Gly-Lys) (interchain with K-? in acceptor proteins) cross-link involves residue glycine 101.

This sequence belongs to the URM1 family. In terms of assembly, interacts with cer. Post-translationally, C-terminal thiocarboxylation occurs in 2 steps, it is first acyl-adenylated (-COAMP) via the hesA/moeB/thiF part of the MOCS3 homolog, then thiocarboxylated (-COSH) via the rhodanese domain of the MOCS3 homolog.

It is found in the cytoplasm. Its pathway is tRNA modification; 5-methoxycarbonylmethyl-2-thiouridine-tRNA biosynthesis. Acts as a sulfur carrier required for 2-thiolation of mcm(5)S(2)U at tRNA wobble positions of cytosolic tRNA(Lys), tRNA(Glu) and tRNA(Gln). Serves as sulfur donor in tRNA 2-thiolation reaction by being thiocarboxylated (-COSH) at its C-terminus by MOCS3. The sulfur is then transferred to tRNA to form 2-thiolation of mcm(5)S(2)U. Also acts as a ubiquitin-like protein (UBL) that is covalently conjugated via an isopeptide bond to lysine residues of target proteins such as Prx2/Jafrac1, Ciao1, Eip71CD and GILT1. The thiocarboxylated form serves as substrate for conjugation and oxidative stress specifically induces the formation of UBL-protein conjugates. This is Ubiquitin-related modifier 1 homolog from Drosophila sechellia (Fruit fly).